The primary structure comprises 845 residues: MLSGVWFLSVLTVAGILQTESRKTAKDICKIRCLCEEKENVLNINCENKGFTTVSLLQPPQYRIYQLFLNGNLLTRLYPNEFVNYSNAVTLHLGNNGLQEIRTGAFSGLKTLKRLHLNNNKLEILREDTFLGLESLEYLQADYNYISAIEAGAFSKLNKLKVLILNDNLLLSLPSNVFRFVLLTHLDLRGNRLKVMPFAGVLEHIGGIMEIQLEENPWNCTCDLLPLKAWLDTITVFVGEIVCETPFRLHGKDVTQLTRQDLCPRKSASDSSQRGSHADTHVQRLSPTMNPALNPTRAPKASRPPKMRNRPTPRVTVSKDRQSFGPIMVYQTKSPVPLTCPSSCVCTSQSSDNGLNVNCQERKFTNISDLQPKPTSPKKLYLTGNYLQTVYKNDLLEYSSLDLLHLGNNRIAVIQEGAFTNLTSLRRLYLNGNYLEVLYPSMFDGLQSLQYLYLEYNVIKEIKPLTFDALINLQLLFLNNNLLRSLPDNIFGGTALTRLNLRNNHFSHLPVKGVLDQLPAFIQIDLQENPWDCTCDIMGLKDWTEHANSPVIINEVTCESPAKHAGEILKFLGREAICPDSPNLSDGTVLSMNHNTDTPRSLSVSPSSYPELHTEVPLSVLILGLLVVFILSVCFGAGLFVFVLKRRKGVPSVPRNTNNLDVSSFQLQYGSYNTETHDKTDGHVYNYIPPPVGQMCQNPIYMQKEGDPVAYYRNLQEFSYSNLEEKKEEPATPAYTISATELLEKQATPREPELLYQNIAERVKELPSAGLVHYNFCTLPKRQFAPSYESRRQNQDRINKTVLYGTPRKCFVGQSKPNHPLLQAKPQSEPDYLEVLEKQTAISQL.

The first 21 residues, 1–21, serve as a signal peptide directing secretion; sequence MLSGVWFLSVLTVAGILQTES. Residues 22–621 are Extracellular-facing; it reads RKTAKDICKI…LHTEVPLSVL (600 aa). 2 cysteine pairs are disulfide-bonded: Cys-29/Cys-35 and Cys-33/Cys-46. LRR repeat units lie at residues 63–84, 87–108, 111–132, 135–156, 159–180, and 182–203; these read RIYQLFLNGNLLTRLYPNEFVN, NAVTLHLGNNGLQEIRTGAFSG, TLKRLHLNNNKLEILREDTFLG, SLEYLQADYNYISAIEAGAFSK, KLKVLILNDNLLLSLPSNVFRF, and LLTHLDLRGNRLKVMPFAGVLE. A glycan (N-linked (GlcNAc...) asparagine) is linked at Asn-84. A required for interaction with PTPRD region spans residues 167 to 215; it reads DNLLLSLPSNVFRFVLLTHLDLRGNRLKVMPFAGVLEHIGGIMEIQLEE. The LRRCT 1 domain occupies 216–265; sequence NPWNCTCDLLPLKAWLDTITVFVGEIVCETPFRLHGKDVTQLTRQDLCPR. 2 cysteine pairs are disulfide-bonded: Cys-220-Cys-243 and Cys-222-Cys-263. Residues 263–321 are disordered; it reads CPRKSASDSSQRGSHADTHVQRLSPTMNPALNPTRAPKASRPPKMRNRPTPRVTVSKDR. A compositionally biased stretch (polar residues) spans 283-293; sequence QRLSPTMNPAL. The LRRNT domain maps to 331 to 373; sequence QTKSPVPLTCPSSCVCTSQSSDNGLNVNCQERKFTNISDLQPK. LRR repeat units lie at residues 376 to 397, 400 to 421, 424 to 445, 448 to 469, 472 to 493, and 495 to 516; these read SPKKLYLTGNYLQTVYKNDLLE, SLDLLHLGNNRIAVIQEGAFTN, SLRRLYLNGNYLEVLYPSMFDG, SLQYLYLEYNVIKEIKPLTFDA, NLQLLFLNNNLLRSLPDNIFGG, and ALTRLNLRNNHFSHLPVKGVLD. An N-linked (GlcNAc...) asparagine glycan is attached at Asn-421. Residues 529-580 form the LRRCT 2 domain; it reads NPWDCTCDIMGLKDWTEHANSPVIINEVTCESPAKHAGEILKFLGREAICPD. Residues 622–642 form a helical membrane-spanning segment; that stretch reads ILGLLVVFILSVCFGAGLFVF. The Cytoplasmic segment spans residues 643–845; it reads VLKRRKGVPS…LEKQTAISQL (203 aa). A Phosphotyrosine modification is found at Tyr-756.

This sequence belongs to the SLITRK family. In terms of assembly, interacts with PTPRD; this interaction is PTPRD splicing-dependent and may induce pre-synaptic differentiation. Interacts with NTRK2. As to expression, expressed predominantly in the cerebral cortex of the brain but also at low levels in the spinal cord and medulla. Also expressed in some astrocytic brain tumors such as astrocytomas, oligodendrogliomas, glioblastomas, gangliogliomas and primitive neuroectodermal tumors.

Its subcellular location is the membrane. The protein localises to the cell membrane. The protein resides in the cell projection. It is found in the dendrite. Functionally, it is involved in synaptogenesis and promotes excitatory synapse differentiation. Suppresses neurite outgrowth. Involved in the negative regulation of NTRK2. This Homo sapiens (Human) protein is SLIT and NTRK-like protein 2 (SLITRK2).